The sequence spans 368 residues: Histidinol-phosphate aminotransferase (368 aa).

Lysine 215 is modified (N6-(pyridoxal phosphate)lysine).

This sequence belongs to the class-II pyridoxal-phosphate-dependent aminotransferase family. Histidinol-phosphate aminotransferase subfamily. As to quaternary structure, homodimer. Pyridoxal 5'-phosphate serves as cofactor.

It catalyses the reaction L-histidinol phosphate + 2-oxoglutarate = 3-(imidazol-4-yl)-2-oxopropyl phosphate + L-glutamate. It participates in amino-acid biosynthesis; L-histidine biosynthesis; L-histidine from 5-phospho-alpha-D-ribose 1-diphosphate: step 7/9. This Buchnera aphidicola subsp. Acyrthosiphon pisum (strain 5A) protein is Histidinol-phosphate aminotransferase.